We begin with the raw amino-acid sequence, 368 residues long: Probable magnesium transporter (368 aa).

Residues 1-4 (MEDK) are Extracellular-facing. The chain crosses the membrane as a helical span at residues 5–25 (YIGLALAMSSSLAIGTSFIIT). Residues 26–50 (KKGLMDASARTGGTDGVQASDYLQN) lie on the Cytoplasmic side of the membrane. A helical membrane pass occupies residues 51-71 (PIWWGGMITMAIGEIANFAAY). Residues 72-76 (TFAPA) lie on the Extracellular side of the membrane. The helical transmembrane segment at 77 to 97 (ILVTPLGALSVIIGAVLAAIF) threads the bilayer. The Cytoplasmic segment spans residues 98–101 (LKER). A helical membrane pass occupies residues 102-122 (LGTLGKMGCAICLMGSVIIIL). The Extracellular segment spans residues 123 to 143 (HAPPDKEVQTVDEILGYATQP). The helical transmembrane segment at 144–164 (GFMFYCTVVTLYSLFMIYKIV) threads the bilayer. Over 165 to 175 (PKYGNTNPMIY) the chain is Cytoplasmic. A helical membrane pass occupies residues 176 to 196 (LSICSSVGSISVMSIKAFGIA). The Extracellular segment spans residues 197-206 (LKLTLGGNNQ). The chain crosses the membrane as a helical span at residues 207–227 (FTHVSTYLFLIVVALCIVTQM). Over 228–240 (NYFNKALDQFDTS) the chain is Cytoplasmic. A helical transmembrane segment spans residues 241–261 (IVNPLYYVTFTTFTLAASFIL). The Extracellular portion of the chain corresponds to 262–269 (FKGFNTSS). Asn-266 carries an N-linked (GlcNAc...) asparagine glycan. Residues 270–290 (AVDIISLLIGFLIIFSGVYLL) traverse the membrane as a helical segment. Residues 291–368 (NISRSESPMV…GDEDTRNYRH (78 aa)) are Cytoplasmic-facing.

This sequence belongs to the NIPA family.

The protein localises to the cell membrane. It localises to the early endosome. The catalysed reaction is Mg(2+)(in) = Mg(2+)(out). Probably acts as a selective Mg(2+) transporter. Plays a role in cell wall integrity and in engulfment by host macrophages. The sequence is that of Probable magnesium transporter from Candida albicans (strain SC5314 / ATCC MYA-2876) (Yeast).